The sequence spans 212 residues: Thymidylate kinase (212 aa).

Gly-11–Ser-18 contributes to the ATP binding site.

Belongs to the thymidylate kinase family.

The catalysed reaction is dTMP + ATP = dTDP + ADP. Functionally, phosphorylation of dTMP to form dTDP in both de novo and salvage pathways of dTTP synthesis. The polypeptide is Thymidylate kinase (Vibrio vulnificus (strain CMCP6)).